Here is a 321-residue protein sequence, read N- to C-terminus: tRNA U34 carboxymethyltransferase (321 aa).

Residues Lys-90, Trp-104, Lys-109, Gly-129, 151 to 153 (DPT), 180 to 181 (IE), Met-195, Tyr-199, and Arg-314 contribute to the carboxy-S-adenosyl-L-methionine site.

This sequence belongs to the class I-like SAM-binding methyltransferase superfamily. CmoB family. As to quaternary structure, homotetramer.

It carries out the reaction carboxy-S-adenosyl-L-methionine + 5-hydroxyuridine(34) in tRNA = 5-carboxymethoxyuridine(34) in tRNA + S-adenosyl-L-homocysteine + H(+). Functionally, catalyzes carboxymethyl transfer from carboxy-S-adenosyl-L-methionine (Cx-SAM) to 5-hydroxyuridine (ho5U) to form 5-carboxymethoxyuridine (cmo5U) at position 34 in tRNAs. In Pasteurella multocida (strain Pm70), this protein is tRNA U34 carboxymethyltransferase.